The sequence spans 564 residues: MATPNQEAIDTFISITGASDAVALQKLEEHRGDLNQAVNAYFSEGDRNVVREAPVNDDDEMDIDDVIPAPQSPLSMFNAARTIGRPPFSLLDSDFARRVFDSDPLMPRPPFVSHPREVRQIPIEVKDSSGPSGRSSDAPTIEDVTETAHVQGPVTTQGTVIIDEESDDDIPFAPMGRSRQDRPAGSVANNNNQDYNDIEEEMIRAAIEASKKEAEGSSNPLLEERPLHMEDDDDIAIAVTMSLKSAEEEVLRSQGYKASTSEIGASAVTAAQGPQDTQALNGRLAAPSSPFDDDSDDVDEQPLVRHRPRRAASGSLAPPNADRSRSGSPEEEHASINPAERGSGFPSEWGGISSEEHDEAVMLEAAMFGGIPETGYNHLPFLPPQPRAQPRPPSPSLTAQRLIREQQDDEYVASLQADRDKEMKSIRDAEARQLEEETARKAFLEEEKKKEEEAQRKLEEEQELERQLDAKEASLPKEPQADEENAITLLIRMPDGTRRGRRFLKSDKLQTLFNFIDIARVVKPNTYRLVRPYPRHAFGDGESESTLNDLGLTSKQEALFLELI.

Ala2 bears the N-acetylalanine mark. In terms of domain architecture, UBA-like spans 2–44 (ATPNQEAIDTFISITGASDAVALQKLEEHRGDLNQAVNAYFSE). UIM domains are found at residues 198 to 217 (IEEE…AEGS) and 230 to 249 (EDDD…AEEE). Positions 210-229 (SKKEAEGSSNPLLEERPLHM) are disordered. 3 disordered regions span residues 267 to 358 (AVTA…EEHD), 371 to 423 (IPET…DKEM), and 443 to 483 (FLEE…QADE). The span at 291-300 (FDDDSDDVDE) shows a compositional bias: acidic residues. 4 positions are modified to phosphoserine: Ser295, Ser324, Ser326, and Ser328. Positions 322-334 (DRSRSGSPEEEHA) are enriched in basic and acidic residues. Residues 381–395 (FLPPQPRAQPRPPSP) show a composition bias toward pro residues. The stretch at 412–478 (VASLQADRDK…DAKEASLPKE (67 aa)) forms a coiled coil. A compositionally biased stretch (basic and acidic residues) spans 443 to 475 (FLEEEKKKEEEAQRKLEEEQELERQLDAKEASL). The region spanning 482-560 (DEENAITLLI…GLTSKQEALF (79 aa)) is the UBX domain.

As to quaternary structure, interacts with RABA5C/ARA-4.

This is Plant UBX domain-containing protein 8 from Arabidopsis thaliana (Mouse-ear cress).